Consider the following 1212-residue polypeptide: DNA-directed RNA polymerase subunit beta'' (1212 aa).

Residues Cys229, Cys302, Cys309, and Cys312 each coordinate Zn(2+). Positions 1162 to 1212 (QKETSKNKKETSKNKKETSKNKKETSKNKKETSKNKKETSKNKKEASKNKK) are disordered.

It belongs to the RNA polymerase beta' chain family. RpoC2 subfamily. In terms of assembly, in plastids the minimal PEP RNA polymerase catalytic core is composed of four subunits: alpha, beta, beta', and beta''. When a (nuclear-encoded) sigma factor is associated with the core the holoenzyme is formed, which can initiate transcription. It depends on Zn(2+) as a cofactor.

It localises to the plastid. It is found in the chloroplast. It catalyses the reaction RNA(n) + a ribonucleoside 5'-triphosphate = RNA(n+1) + diphosphate. Its function is as follows. DNA-dependent RNA polymerase catalyzes the transcription of DNA into RNA using the four ribonucleoside triphosphates as substrates. The protein is DNA-directed RNA polymerase subunit beta'' of Cryptomeria japonica (Japanese cedar).